Here is a 292-residue protein sequence, read N- to C-terminus: Replication-associated protein A (292 aa).

Residues 9–111 enclose the CRESS-DNA virus Rep endonuclease domain; sequence RLQSKYVFLT…DGDIKTRGDF (103 aa). Residues 16 to 19 carry the RCR-1 motif; the sequence is FLTY. A divalent metal cation contacts are provided by Glu-50, His-58, and His-60. An RCR-2 motif is present at residues 58–60; the sequence is HYH. Residue Tyr-98 is the For DNA cleavage activity of the active site. The RCR-3 signature appears at 98 to 101; it reads YISK. Asp-102 serves as a coordination point for a divalent metal cation. Positions 160–172 are oligomerization; it reads SANKLFPPQPEQY. The tract at residues 181–185 is binding to RBR1; that stretch reads LRCHE. The interval 230-292 is disordered; it reads GLGSDTPAST…PSSSSHCGSN (63 aa). Residues 255-292 show a composition bias toward low complexity; sequence SGDTTTGTGPSTSPTTMNTPPIISSTTSPSSSSHCGSN.

It belongs to the geminiviridae Rep protein family. Homooligomer. Interacts with host retinoblastoma-related protein 1 (RBR1), and may thereby deregulate the host cell cycle. Part of the C- and V-complexes which are RepA-Rep-DNA complexes involved in the c-sense and v-sense transcription. Requires Mg(2+) as cofactor. Mn(2+) serves as cofactor.

Its subcellular location is the host nucleus. The protein resides in the host cytoplasm. In terms of biological role, implicated in enhancement of V-sense gene expression. Acts a an inhibitor of C-sense gene transcription. This is Replication-associated protein A from Bean yellow dwarf virus (BeYDV).